The primary structure comprises 1791 residues: 1-phosphatidylinositol-3-phosphate 5-kinase FAB1B (1791 aa).

An FYVE-type zinc finger spans residues 39–105 (DQSCRVCYEC…VCNYCFRQWE (67 aa)). Zn(2+) contacts are provided by C45, C48, C61, C64, C69, C72, C97, and C100. 4 disordered regions span residues 166–186 (HGVS…SRRS), 279–370 (EQFQ…DRTT), 770–790 (SDLS…NPIV), and 834–859 (QQNN…DHQS). Positions 279-293 (EQFQKKSEHDGRDEC) are enriched in basic and acidic residues. The segment covering 324-345 (PENEEDERESALFDEEDNEGDA) has biased composition (acidic residues). A compositionally biased stretch (basic and acidic residues) spans 838 to 850 (EKPKETQSQKEEF). Residues 1077 to 1111 (EKGFRRRIGELEEVLQKEKAEFEENMQKILHREVN) adopt a coiled-coil conformation. Over residues 1151-1164 (NSDDTKREENEKPP) the composition is skewed to basic and acidic residues. Residues 1151–1242 (NSDDTKREEN…DTSYPLENKV (92 aa)) form a disordered region. Polar residues-rich tracts occupy residues 1167 to 1188 (KSQT…SEVN) and 1196 to 1206 (TGDTGSLNNVQ). The PIPK domain occupies 1433–1758 (SELNIPRPVD…RFRKAMTTYF (326 aa)). The segment at 1769–1791 (NVVANNSKSDQPEETSQAGTQAE) is disordered. Residues 1771–1791 (VANNSKSDQPEETSQAGTQAE) are compositionally biased toward polar residues.

Component of the PI(3,5)P2 regulatory complex at least composed of ATG18, SAC/FIG4, FAB1 and VAC14. Mg(2+) is required as a cofactor. Requires Mn(2+) as cofactor. In terms of tissue distribution, ubiquitous with highest expression levels in the root hair zone, pollen, and stamens.

Its subcellular location is the endosome membrane. It catalyses the reaction a 1,2-diacyl-sn-glycero-3-phospho-(1D-myo-inositol-3-phosphate) + ATP = a 1,2-diacyl-sn-glycero-3-phospho-(1D-myo-inositol-3,5-bisphosphate) + ADP + H(+). Functionally, the PI(3,5)P2 regulatory complex regulates both the synthesis and turnover of phosphatidylinositol 3,5-bisphosphate (PtdIns(3,5)P2). Catalyzes the phosphorylation of phosphatidylinositol 3-phosphate on the fifth hydroxyl of the myo-inositol ring, to form phosphatidylinositol 3,5-bisphosphate. Plays an important role in maintenance of endomembrane homeostasis including endocytosis, vacuole formation, and vacuolar acidification processes. Required for development of viable pollen. Might mediate recycling of auxin transporters. In Arabidopsis thaliana (Mouse-ear cress), this protein is 1-phosphatidylinositol-3-phosphate 5-kinase FAB1B (FAB1B).